Reading from the N-terminus, the 530-residue chain is Bifunctional purine biosynthesis protein PurH (530 aa).

Positions 1–148 (MEQARPIRRA…KNHKDVAIVV (148 aa)) constitute an MGS-like domain.

The protein belongs to the PurH family.

It catalyses the reaction (6R)-10-formyltetrahydrofolate + 5-amino-1-(5-phospho-beta-D-ribosyl)imidazole-4-carboxamide = 5-formamido-1-(5-phospho-D-ribosyl)imidazole-4-carboxamide + (6S)-5,6,7,8-tetrahydrofolate. The catalysed reaction is IMP + H2O = 5-formamido-1-(5-phospho-D-ribosyl)imidazole-4-carboxamide. It functions in the pathway purine metabolism; IMP biosynthesis via de novo pathway; 5-formamido-1-(5-phospho-D-ribosyl)imidazole-4-carboxamide from 5-amino-1-(5-phospho-D-ribosyl)imidazole-4-carboxamide (10-formyl THF route): step 1/1. The protein operates within purine metabolism; IMP biosynthesis via de novo pathway; IMP from 5-formamido-1-(5-phospho-D-ribosyl)imidazole-4-carboxamide: step 1/1. The polypeptide is Bifunctional purine biosynthesis protein PurH (Aeromonas salmonicida (strain A449)).